Here is an 88-residue protein sequence, read N- to C-terminus: Small ribosomal subunit protein uS17 (88 aa).

This sequence belongs to the universal ribosomal protein uS17 family. In terms of assembly, part of the 30S ribosomal subunit.

One of the primary rRNA binding proteins, it binds specifically to the 5'-end of 16S ribosomal RNA. In Brevibacillus brevis (strain 47 / JCM 6285 / NBRC 100599), this protein is Small ribosomal subunit protein uS17.